Consider the following 611-residue polypeptide: MPVDTSQRLAKLRELMKERHVDVYLIPSEDSHQSEYIAPCDARRAFISGFTGSAGCAIVSMSKAALSTDGRYFNQAAKQLDENWLLLKRGMENVPTWQEWTAEQAEGGKVVGVDPSLITAAEARKLSDTIKDTGGSLVGVPDNLVDLVWGGDRPARPREKVMVHPIEFAGQSFEEKITDLRKELTKKKRAGMVISMLDEIAWLYNLRGADIPFNPVFFAYAIVTHSTAELFVDEAKLTQAVKEHLGDKVALRPYESIFESLKLLSQAAASNGDEGHQKFLLSDKASWSLNLALGGEEKVEEVRSPIADAKAVKNAVELEGTRACHIRDGAALTEYFAWLENELINKKTVLNEVNASDKLAQIRSKHKDFVGLSFDTISSTGPNAAIIHYRAERGNCPNIDPNAVYLCDSGAQYLDGTTDTTRTLHFGKPTEMEKKAYTLVLKGLISIDTAVFPKGTTGYAIDAFARQHLWRNGLDYLHGTGHGVGSYLNVHEGPMGIGTRVQYAETPITAGNVLSDEPGYYEDGNFGIRIENIVVAKEVKTPHKFGDKPWIGFEHVTMTPLCQNLMDTSLLTAEEKKWVNDYHTEVWEKTKGFFNNDELTRNWLKRETQPI.

Asp-408, Asp-419, Glu-517, and Glu-531 together coordinate Mn(2+).

This sequence belongs to the peptidase M24B family. Mn(2+) serves as cofactor.

The catalysed reaction is Release of any N-terminal amino acid, including proline, that is linked to proline, even from a dipeptide or tripeptide.. Functionally, catalyzes the removal of a penultimate prolyl residue from the N-termini of peptides. This chain is Probable Xaa-Pro aminopeptidase P (AMPP), found in Coccidioides posadasii (strain RMSCC 757 / Silveira) (Valley fever fungus).